We begin with the raw amino-acid sequence, 155 residues long: MSRRGAAEEKTAKSDPIYRNRLVNMLVNRILKHGKKSLAYQIIYRAVKKIQQKTETNPLSVLRQAIRGVTPDITVKARRVGGSTHQVPIEIGSTQGKALAIRWLLAASRKRPGRNMAFKLSSELVDAAKGSGDAIRKKEETHRMAEANRAFAHFR.

It belongs to the universal ribosomal protein uS7 family. In terms of assembly, part of the 30S ribosomal subunit.

The protein resides in the plastid. Its subcellular location is the chloroplast. In terms of biological role, one of the primary rRNA binding proteins, it binds directly to 16S rRNA where it nucleates assembly of the head domain of the 30S subunit. The polypeptide is Small ribosomal subunit protein uS7cz/uS7cy (rps7-A) (Coffea arabica (Arabian coffee)).